The sequence spans 420 residues: CinA-like protein (420 aa).

This sequence belongs to the CinA family.

This is CinA-like protein from Syntrophus aciditrophicus (strain SB).